Here is a 132-residue protein sequence, read N- to C-terminus: Cytidine deaminase (132 aa).

A CMP/dCMP-type deaminase domain is found at 1–128 (MDRQMLIKEA…ELLPGAFTAE (128 aa)). 42–44 (NIE) serves as a coordination point for substrate. A Zn(2+)-binding site is contributed by C53. The active-site Proton donor is the E55. 2 residues coordinate Zn(2+): C86 and C89.

The protein belongs to the cytidine and deoxycytidylate deaminase family. Zn(2+) serves as cofactor.

It catalyses the reaction cytidine + H2O + H(+) = uridine + NH4(+). The catalysed reaction is 2'-deoxycytidine + H2O + H(+) = 2'-deoxyuridine + NH4(+). Functionally, this enzyme scavenges exogenous and endogenous cytidine and 2'-deoxycytidine for UMP synthesis. The chain is Cytidine deaminase (cdd) from Halalkalibacterium halodurans (strain ATCC BAA-125 / DSM 18197 / FERM 7344 / JCM 9153 / C-125) (Bacillus halodurans).